We begin with the raw amino-acid sequence, 565 residues long: NAD-dependent malic enzyme (565 aa).

Residue tyrosine 104 is the Proton donor of the active site. Residue arginine 157 participates in NAD(+) binding. Lysine 175 acts as the Proton acceptor in catalysis. Residues glutamate 246, aspartate 247, and aspartate 270 each coordinate a divalent metal cation. Positions 270 and 418 each coordinate NAD(+).

It belongs to the malic enzymes family. Homotetramer. Mg(2+) is required as a cofactor. Requires Mn(2+) as cofactor.

The enzyme catalyses (S)-malate + NAD(+) = pyruvate + CO2 + NADH. The catalysed reaction is oxaloacetate + H(+) = pyruvate + CO2. This is NAD-dependent malic enzyme from Escherichia coli O157:H7.